A 403-amino-acid chain; its full sequence is Farnesyl pyrophosphate synthase (403 aa).

Positions 156 and 160 each coordinate Mg(2+). Positions 156-160 (DDLAD) match the DDXXD motif motif.

Belongs to the FPP/GGPP synthase family. Requires Mg(2+) as cofactor.

The enzyme catalyses isopentenyl diphosphate + (2E)-geranyl diphosphate = (2Z,6E)-farnesyl diphosphate + diphosphate. Its pathway is pheromone biosynthesis. In terms of biological role, farnesyl pyrophosphate synthase involved in pheromone biosynthesis by catalyzing the formation of (2Z,6E)-farnesyl diphosphate. This Nezara viridula (Southern green stink bug) protein is Farnesyl pyrophosphate synthase.